We begin with the raw amino-acid sequence, 411 residues long: Aspartate kinase (411 aa).

Positions 265 to 348 (LTIRGVPDTP…KIAKVSIVGV (84 aa)) constitute an ACT domain.

The protein belongs to the aspartokinase family.

The protein localises to the cytoplasm. The enzyme catalyses L-aspartate + ATP = 4-phospho-L-aspartate + ADP. The protein operates within amino-acid biosynthesis; L-lysine biosynthesis via DAP pathway; (S)-tetrahydrodipicolinate from L-aspartate: step 1/4. It participates in amino-acid biosynthesis; L-methionine biosynthesis via de novo pathway; L-homoserine from L-aspartate: step 1/3. Its pathway is amino-acid biosynthesis; L-threonine biosynthesis; L-threonine from L-aspartate: step 1/5. Its activity is regulated as follows. Allosterically feedback inhibited by L-lysine and L-threonine individually and also subject to a concerted feedback inhibition by these amino acids. Involved in the biosynthesis of L-aspartate-beta-semialdehyde which is a central intermediate in the biosynthesis of different amino acids (L-lysine, L-methionine, L-threonine). Catalyzes the phosphorylation of the beta-carboxyl group of L-aspartate to yield 4-phospho-L-aspartate. This is Aspartate kinase from Pseudomonas putida (strain ATCC 47054 / DSM 6125 / CFBP 8728 / NCIMB 11950 / KT2440).